The following is a 147-amino-acid chain: Elongation factor Tu (147 aa).

This sequence belongs to the GTP-binding elongation factor family. EF-Tu/EF-1A subfamily. As to quaternary structure, monomer.

It is found in the cytoplasm. This protein promotes the GTP-dependent binding of aminoacyl-tRNA to the A-site of ribosomes during protein biosynthesis. The protein is Elongation factor Tu (tuf) of Fructilactobacillus sanfranciscensis (Lactobacillus sanfranciscensis).